We begin with the raw amino-acid sequence, 530 residues long: Glutamate--cysteine ligase (530 aa).

Belongs to the glutamate--cysteine ligase type 1 family. Type 1 subfamily.

The catalysed reaction is L-cysteine + L-glutamate + ATP = gamma-L-glutamyl-L-cysteine + ADP + phosphate + H(+). It functions in the pathway sulfur metabolism; glutathione biosynthesis; glutathione from L-cysteine and L-glutamate: step 1/2. The sequence is that of Glutamate--cysteine ligase from Azotobacter vinelandii (strain DJ / ATCC BAA-1303).